The following is a 577-amino-acid chain: Thrombomodulin (577 aa).

An N-terminal signal peptide occupies residues 1–16 (MLGIFFLGVLAPASLG). At 17–517 (LSALAKLQPT…GPPSARPVHS (501 aa)) the chain is on the extracellular side. The region spanning 31 to 167 (VEHECFALFQ…TETQGFLCEF (137 aa)) is the C-type lectin domain. N-linked (GlcNAc...) asparagine glycosylation occurs at N113. C135 and C156 are disulfide-bonded. EGF-like domains are found at residues 240–280 (GAWN…RSCA) and 283–323 (VVQS…HRCE). N243 carries an N-linked (GlcNAc...) asparagine glycan. 18 cysteine pairs are disulfide-bonded: C244/C255, C251/C264, C266/C279, C287/C295, C291/C307, C309/C322, C328/C339, C335/C348, C350/C361, C368/C377, C373/C387, C389/C403, C407/C416, C412/C424, C426/C438, C444/C454, C449/C463, and C465/C479. N-linked (GlcNAc...) asparagine glycosylation is present at N256. The EGF-like 3; calcium-binding domain occupies 324–362 (DVDDCKQGPNPCPQLCVNTKGGFECFCYDGYELVDGECV). EGF-like domains follow at residues 364 to 404 (LLDP…HKCE) and 403 to 439 (CEMF…SVCT). A glycan (N-linked (GlcNAc...) asparagine) is linked at N408. The EGF-like 6; calcium-binding domain maps to 440–480 (DIDECSQGECFTSECRNFPGSYECICGPDTALAGQISKDCD). The segment at 476-513 (SKDCDPIPVREDTKEEEGSGEPPVSPTPGSPTGPPSAR) is disordered. Residues 477–492 (KDCDPIPVREDTKEEE) are compositionally biased toward basic and acidic residues. O-linked (Xyl...) (chondroitin sulfate) serine glycosylation occurs at S494. A compositionally biased stretch (pro residues) spans 498–512 (PVSPTPGSPTGPPSA). A helical membrane pass occupies residues 518-541 (GVLIGISIASLSLVVALLALLCHL). The Cytoplasmic portion of the chain corresponds to 542–577 (RKKQGAARAELEYKCASSAKEVVLQHVRTDRTLQKF).

As to quaternary structure, interacts with ITGAL, ITGAM and ITGB2. Interacts with thrombin/F2; this interaction switches the specificity of thrombin from a procoagulant to an anticoagulant and antifibrinolytic protease. Interacts with ANGP1 and ANGP2; these interactions significantly inhibit the generation of activated PC and TAFIa/CPB2 by the thrombin/thrombomodulin complex. Interacts with PF4; this interaction enhances generation of activated protein C. Interacts with HMGB1; this interaction inhibits HMGB1 inflammatory activity. In terms of tissue distribution, endothelial cells are unique in synthesizing thrombomodulin.

It localises to the membrane. Endothelial cell receptor that plays a critical role in regulating several physiological processes including hemostasis, coagulation, fibrinolysis, inflammation, and angiogenesis. Acts as a cofactor for thrombin activation of protein C/PROC on the surface of vascular endothelial cells leading to initiation of the activated protein C anticoagulant pathway. Also accelerates the activation of the plasma carboxypeptidase B2/CPB2, which catalyzes removal of C-terminal basic amino acids from its substrates including kinins or anaphylatoxins leading to fibrinolysis inhibition. Plays critical protective roles in changing the cleavage specificity of protease-activated receptor 1/PAR1, inhibiting endothelial cell permeability and inflammation. Suppresses inflammation distinctly from its anticoagulant cofactor activity by sequestering HMGB1 thereby preventing it from engaging cellular receptors such as RAGE and contributing to the inflammatory response. This chain is Thrombomodulin (Thbd), found in Mus musculus (Mouse).